We begin with the raw amino-acid sequence, 80 residues long: NADH-ubiquinone oxidoreductase chain 5 (80 aa).

The next 2 helical transmembrane spans lie at 4 to 24 and 44 to 64; these read ISFL…LNFM and IVMT…VLLI.

Belongs to the complex I subunit 5 family.

The protein localises to the mitochondrion inner membrane. The enzyme catalyses a ubiquinone + NADH + 5 H(+)(in) = a ubiquinol + NAD(+) + 4 H(+)(out). Core subunit of the mitochondrial membrane respiratory chain NADH dehydrogenase (Complex I) that is believed to belong to the minimal assembly required for catalysis. Complex I functions in the transfer of electrons from NADH to the respiratory chain. The immediate electron acceptor for the enzyme is believed to be ubiquinone. The polypeptide is NADH-ubiquinone oxidoreductase chain 5 (ND5) (Ceratitis capitata (Mediterranean fruit fly)).